We begin with the raw amino-acid sequence, 1293 residues long: Period circadian protein homolog 1 (1293 aa).

Positions 1-134 (MSGPLEGADG…SSEQSARART (134 aa)) are disordered. Residues 1–151 (MSGPLEGADG…LRELKLRLPP (151 aa)) are interaction with BTRC. Composition is skewed to low complexity over residues 48–57 (NSNGSSGNES) and 64–115 (GASQ…ASSE). Over residues 116 to 132 (QDNPSTSGCSSEQSARA) the composition is skewed to polar residues. Thr121 is modified (phosphothreonine; by CSNK1E). Phosphoserine; by CSNK1E is present on residues Ser122 and Ser126. The Nuclear export signal 1 motif lies at 138–147 (LMTALRELKL). 2 PAS domains span residues 208–275 (ITSE…PSRL) and 348–414 (YEAP…KILQ). A PAC domain is found at 422–465 (HSPIRFCARNGEYVTMDTSWAGFVHPWSRKVAFVLGRHKVRTAP). The Nuclear export signal 2 motif lies at 489-498 (LSEQIHRLLL). 2 disordered regions span residues 509-544 (LCGVGPLMSPGPLHSPGSSSDSNGGDAEGPGPPAPV) and 647-697 (TKRK…KEPV). Low complexity-rich tracts occupy residues 513–533 (GPLMSPGPLHSPGSSSDSNGG) and 652–661 (ASSSCTASSA). A required for phosphorylation by CSNK1E region spans residues 596-814 (ELEVAPAPDQ…GLDTSSVAPS (219 aa)). Phosphoserine is present on residues Ser660, Ser662, and Ser703. 4 disordered regions span residues 748 to 771 (GLAPGPAPSPAPSPTVAPDPAPDA), 808 to 870 (TSSV…PPAT), 935 to 1094 (SQAP…SKYF), and 1204 to 1293 (SVQD…NGTS). Over residues 750 to 768 (APGPAPSPAPSPTVAPDPA) the composition is skewed to pro residues. At Ser814 the chain carries Phosphoserine. The short motif at 823–839 (IPSGRRHHCRSKAKRSR) is the Nuclear localization signal element. Basic residues predominate over residues 826-843 (GRRHHCRSKAKRSRHHQT). 2 stretches are compositionally biased toward pro residues: residues 856 to 870 (SPVPSSGPWPPPPAT) and 952 to 962 (PSLPPPPPSPP). Residues 969 to 982 (LFNSRCSSPLQLNL) are compositionally biased toward polar residues. 2 positions are modified to phosphoserine: Ser975 and Ser976. Residues 978–985 (LQLNLLQL) carry the Nuclear export signal 3 motif. Residues 1032–1058 (LSGSSDLLELLLQEDSRSGTGSAASGS) show a composition bias toward low complexity. The LXXLL motif lies at 1039-1043 (LELLL). The span at 1059–1073 (LGSGLGSGSGSGSHE) shows a compositional bias: gly residues. A compositionally biased stretch (low complexity) spans 1074 to 1091 (GGSTSASITRSSQSSHTS). The CRY binding domain stretch occupies residues 1145–1293 (SRDAASVLKQ…ALPAEENGTS (149 aa)). The segment covering 1232–1250 (GEGGGVGGGGGGVGGGGGD) has biased composition (gly residues). Polar residues predominate over residues 1255–1269 (AQTQIGTKGSSSQDS).

In terms of assembly, homodimer. Component of the circadian core oscillator, which includes the CRY proteins, CLOCK or NPAS2, BMAL1 or BMAL2, CSNK1D and/or CSNK1E, TIMELESS, and the PER proteins. Interacts directly with TIMELESS, PER2, PER3, CRY1 and CRY2. Interacts with BMAL1 and CLOCK. Interacts with GPRASP1. Interacts (phosphorylated) with BTRC and FBXW11; the interactions trigger proteasomal degradation. Interacts with NONO and WDR5. Interacts with SFPQ. Interacts with USP2. Interacts with HNF4A. Phosphorylated on serine residues by CSNK1D, CSNK1E and probably also by CSNK1G2. Phosphorylation by CSNK1D or CSNK1E promotes nuclear location of PER proteins as well as ubiquitination and subsequent degradation. May be dephosphorylated by PP1. In terms of processing, ubiquitinated; requires phosphorylation by CSNK1E and interaction with BTRC and FBXW11. Deubiquitinated by USP2. In terms of tissue distribution, expressed in pancreas. In the CNS, highly expressed in the SCN, internal granular layer of granular cells of the olfactory bulb, tuberculum olfactorium, piriform cortex, gyrus dentatus of the hippocampus, cerebellum, pars tuberalis/median eminence, and pituitary, and moderately in the tenia tecta, caudate putamen, accumbens nucleus, spinal cord, superior and inferior colliculus and pineal gland.

It localises to the nucleus. The protein resides in the cytoplasm. Functionally, transcriptional repressor which forms a core component of the circadian clock. The circadian clock, an internal time-keeping system, regulates various physiological processes through the generation of approximately 24 hour circadian rhythms in gene expression, which are translated into rhythms in metabolism and behavior. It is derived from the Latin roots 'circa' (about) and 'diem' (day) and acts as an important regulator of a wide array of physiological functions including metabolism, sleep, body temperature, blood pressure, endocrine, immune, cardiovascular, and renal function. Consists of two major components: the central clock, residing in the suprachiasmatic nucleus (SCN) of the brain, and the peripheral clocks that are present in nearly every tissue and organ system. Both the central and peripheral clocks can be reset by environmental cues, also known as Zeitgebers (German for 'timegivers'). The predominant Zeitgeber for the central clock is light, which is sensed by retina and signals directly to the SCN. The central clock entrains the peripheral clocks through neuronal and hormonal signals, body temperature and feeding-related cues, aligning all clocks with the external light/dark cycle. Circadian rhythms allow an organism to achieve temporal homeostasis with its environment at the molecular level by regulating gene expression to create a peak of protein expression once every 24 hours to control when a particular physiological process is most active with respect to the solar day. Transcription and translation of core clock components (CLOCK, NPAS2, BMAL1, BMAL2, PER1, PER2, PER3, CRY1 and CRY2) plays a critical role in rhythm generation, whereas delays imposed by post-translational modifications (PTMs) are important for determining the period (tau) of the rhythms (tau refers to the period of a rhythm and is the length, in time, of one complete cycle). A diurnal rhythm is synchronized with the day/night cycle, while the ultradian and infradian rhythms have a period shorter and longer than 24 hours, respectively. Disruptions in the circadian rhythms contribute to the pathology of cardiovascular diseases, cancer, metabolic syndromes and aging. A transcription/translation feedback loop (TTFL) forms the core of the molecular circadian clock mechanism. Transcription factors, CLOCK or NPAS2 and BMAL1 or BMAL2, form the positive limb of the feedback loop, act in the form of a heterodimer and activate the transcription of core clock genes and clock-controlled genes (involved in key metabolic processes), harboring E-box elements (5'-CACGTG-3') within their promoters. The core clock genes: PER1/2/3 and CRY1/2 which are transcriptional repressors form the negative limb of the feedback loop and interact with the CLOCK|NPAS2-BMAL1|BMAL2 heterodimer inhibiting its activity and thereby negatively regulating their own expression. This heterodimer also activates nuclear receptors NR1D1/2 and RORA/B/G, which form a second feedback loop and which activate and repress BMAL1 transcription, respectively. Regulates circadian target genes expression at post-transcriptional levels, but may not be required for the repression at transcriptional level. Controls PER2 protein decay. Represses CRY2 preventing its repression on CLOCK/BMAL1 target genes such as FXYD5 and SCNN1A in kidney and PPARA in liver. Besides its involvement in the maintenance of the circadian clock, has an important function in the regulation of several processes. Participates in the repression of glucocorticoid receptor NR3C1/GR-induced transcriptional activity by reducing the association of NR3C1/GR to glucocorticoid response elements (GREs) by BMAL1:CLOCK. Plays a role in the modulation of the neuroinflammatory state via the regulation of inflammatory mediators release, such as CCL2 and IL6. In spinal astrocytes, negatively regulates the MAPK14/p38 and MAPK8/JNK MAPK cascades as well as the subsequent activation of NFkappaB. Coordinately regulates the expression of multiple genes that are involved in the regulation of renal sodium reabsorption. Can act as gene expression activator in a gene and tissue specific manner, in kidney enhances WNK1 and SLC12A3 expression in collaboration with CLOCK. Modulates hair follicle cycling. Represses the CLOCK-BMAL1 induced transcription of BHLHE40/DEC1. In Rattus norvegicus (Rat), this protein is Period circadian protein homolog 1.